The sequence spans 360 residues: Isocitrate dehydrogenase [NAD] subunit 1, mitochondrial (360 aa).

The transit peptide at 1–11 directs the protein to the mitochondrion; sequence MLNRTIAKRTL. The substrate site is built by Arg109, Arg140, and Asp228. Asp228 is a binding site for Mg(2+).

Belongs to the isocitrate and isopropylmalate dehydrogenases family. Octamer of two non-identical subunits IDH1 and IDH2. It depends on Mg(2+) as a cofactor. Requires Mn(2+) as cofactor.

It localises to the mitochondrion. It carries out the reaction D-threo-isocitrate + NAD(+) = 2-oxoglutarate + CO2 + NADH. Allosterically regulated by several compounds including AMP, NAD(+), and citrate. Performs an essential role in the oxidative function of the citric acid cycle. Also binds RNA; specifically to the 5'-untranslated leaders of mitochondrial mRNAs. The polypeptide is Isocitrate dehydrogenase [NAD] subunit 1, mitochondrial (IDH1) (Saccharomyces cerevisiae (strain ATCC 204508 / S288c) (Baker's yeast)).